Reading from the N-terminus, the 248-residue chain is 5'-nucleotidase SurE (248 aa).

4 residues coordinate a divalent metal cation: Asp-8, Asp-9, Ser-39, and Asn-91.

The protein belongs to the SurE nucleotidase family. The cofactor is a divalent metal cation.

The protein localises to the cytoplasm. It catalyses the reaction a ribonucleoside 5'-phosphate + H2O = a ribonucleoside + phosphate. In terms of biological role, nucleotidase that shows phosphatase activity on nucleoside 5'-monophosphates. The polypeptide is 5'-nucleotidase SurE (Neisseria meningitidis serogroup C / serotype 2a (strain ATCC 700532 / DSM 15464 / FAM18)).